The primary structure comprises 434 residues: Serine protease HTRA2, mitochondrial (434 aa).

The disordered stretch occupies residues 34–65 (YSNNTANITTDSSSSSNNNSNRNNKNDNNNED). Residues 35–60 (SNNTANITTDSSSSSNNNSNRNNKND) are compositionally biased toward low complexity. The chain crosses the membrane as a helical span at residues 74 to 92 (LVRFFVPFSLGAVASSLVM). The short motif at 85–88 (AVAS) is the IAP-binding element. Residues 151 to 314 (SNGSGFVIEQ…IPIDYVKVFL (164 aa)) are serine protease. Residues His169, Asp201, and Ser278 each act as charge relay system in the active site. A PDZ domain is found at 337-424 (MGITMLTLTP…NMIIMRGVKQ (88 aa)).

It belongs to the peptidase S1C family. As to quaternary structure, interacts with th/DIAP1 (via BIR 2 domain).

It localises to the mitochondrion intermembrane space. Its subcellular location is the mitochondrion membrane. The catalysed reaction is Cleavage of non-polar aliphatic amino-acids at the P1 position, with a preference for Val, Ile and Met. At the P2 and P3 positions, Arg is selected most strongly with a secondary preference for other hydrophilic residues.. Its function is as follows. Serine protease that shows proteolytic activity against a non-specific substrate beta-casein. Promotes or induces cell death either by direct binding to and inhibition of BIRC proteins (also called inhibitor of apoptosis proteins, IAPs), leading to an increase in caspase activity, or by a BIRC inhibition-independent, caspase-independent and serine protease activity-dependent mechanism. Can antagonize antiapoptotic activity of th/Diap1 by directly inducing the degradation of th/Diap1. The protein is Serine protease HTRA2, mitochondrial of Drosophila willistoni (Fruit fly).